Reading from the N-terminus, the 306-residue chain is D-alanine--D-alanine ligase (306 aa).

An ATP-grasp domain is found at 101–301; that stretch reads KKILAHAGLP…FPDLVEHLVR (201 aa). 129–185 serves as a coordination point for ATP; that stretch reads VAELGLPVVVKAPTQGSSIGVYIVEREEDLEARITDAVAYGGTRVLVEKFIAGPELT. Residues D256, E268, and N270 each contribute to the Mg(2+) site.

This sequence belongs to the D-alanine--D-alanine ligase family. Mg(2+) serves as cofactor. The cofactor is Mn(2+).

It localises to the cytoplasm. The catalysed reaction is 2 D-alanine + ATP = D-alanyl-D-alanine + ADP + phosphate + H(+). Its pathway is cell wall biogenesis; peptidoglycan biosynthesis. Its function is as follows. Cell wall formation. This chain is D-alanine--D-alanine ligase, found in Desulforudis audaxviator (strain MP104C).